The primary structure comprises 102 residues: Small ribosomal subunit protein uS10 (102 aa).

It belongs to the universal ribosomal protein uS10 family. Part of the 30S ribosomal subunit.

Functionally, involved in the binding of tRNA to the ribosomes. In Methanococcus maripaludis (strain C5 / ATCC BAA-1333), this protein is Small ribosomal subunit protein uS10.